The sequence spans 498 residues: Nucleobase transporter PlAzg2 (498 aa).

13 helical membrane-spanning segments follow: residues 88 to 108 (LLAGTVSFFAAVYIIIVNSSI), 118 to 138 (AGIIATILASAIGCFIMGLWG), 142 to 162 (LVIVPGMGINAMFTYTLVQGM), 169 to 189 (ALAAVMMSGICFFAISMTSLV), 203 to 223 (AISVGIGLMLVLIGLHKGGVI), 236 to 256 (FADPGVLVTLATLALTCILYI), 259 to 279 (VPGNLLLAIIGGSALAYLFKA), 312 to 332 (TLVIAVFSLTLVIVFENVGLI), 357 to 377 (ILSGIFGTSPTVSTVEAAAGI), 388 to 408 (IATGTLFLLSFIAMPVITLVP), 412 to 432 (VAPILIFIGGLMMPAVRHISF), 443 to 463 (FIIAFIPLMHSIVDGIAIGFI), and 478 to 498 (VKPLFYIISLLFVMHFVLQTM).

The protein belongs to the nucleobase:cation symporter-2 (NCS2) (TC 2.A.40) family. Azg-like subfamily.

It localises to the cell membrane. With respect to regulation, inhibited by the proton gradient disruptor carbonyl cyanide m-chlorophenylhydrazone (CCCP), but not by the sodium gradient disruptor ouabain. In terms of biological role, transports adenine, guanine, hypoxanthine, xanthine, cytosine and uracil. Transport is probably proton-dependent. This chain is Nucleobase transporter PlAzg2, found in Paenibacillus larvae subsp. larvae (strain NRRL B-3650 / LMG 16245).